The sequence spans 484 residues: MIQGTTSDAGKSTLVAGLCRLARRAGVRVAPFKPQNMALNSAVTIDGGEIGRAQALQAVAAGIDAHTDLNPVLLKPTSDRGAQVIIHGKARMNLDARAYHDYKPVAFEAVLASYARLKASYDTIFVEGAGSPAEINLRERDIANMGFAEAVDCPVVLVSDIDRGGVFAHLTGTLACLSDSEQARVRGFVINRFRGDVSLLQPGLDWLEAKTGKPVLGVVPYLHGLTLDAEDMLPRELRAAQASADALRVVVPALPHISNHTDFDALRAHPQVDFHYVRAGSAPPPADLIILPGSKNVQGDLAFLRAQGWDAVLQRHLRYGGRVIGICGGMQMLGREVADPYGVEGPPGTVEGLGWLDFSTTLTRDKTLKNVTGRLATDAGRIAGYEIHMGETQGPALDAPALLLADEMGGVRPDGARSADGQILATYVHGLFDTPAACASLLAWAGLKNADAIDYPALREASLERLADTLAVHLDLKRFWEAIG.

One can recognise a GATase cobBQ-type domain in the interval 246–437 (ALRVVVPALP…VHGLFDTPAA (192 aa)). The active-site Nucleophile is the cysteine 327. Residue histidine 429 is part of the active site.

It belongs to the CobB/CobQ family. CobQ subfamily.

It functions in the pathway cofactor biosynthesis; adenosylcobalamin biosynthesis. Functionally, catalyzes amidations at positions B, D, E, and G on adenosylcobyrinic A,C-diamide. NH(2) groups are provided by glutamine, and one molecule of ATP is hydrogenolyzed for each amidation. The chain is Cobyric acid synthase from Paraburkholderia phymatum (strain DSM 17167 / CIP 108236 / LMG 21445 / STM815) (Burkholderia phymatum).